The primary structure comprises 348 residues: Protein RecA (348 aa).

Position 65–72 (65–72 (GPESSGKT)) interacts with ATP.

Belongs to the RecA family.

The protein localises to the cytoplasm. Functionally, can catalyze the hydrolysis of ATP in the presence of single-stranded DNA, the ATP-dependent uptake of single-stranded DNA by duplex DNA, and the ATP-dependent hybridization of homologous single-stranded DNAs. It interacts with LexA causing its activation and leading to its autocatalytic cleavage. This Vibrio natriegens protein is Protein RecA.